The primary structure comprises 130 residues: Small ribosomal subunit protein uS8 (130 aa).

The protein belongs to the universal ribosomal protein uS8 family. In terms of assembly, part of the 30S ribosomal subunit. Contacts proteins S5 and S12.

Its function is as follows. One of the primary rRNA binding proteins, it binds directly to 16S rRNA central domain where it helps coordinate assembly of the platform of the 30S subunit. The sequence is that of Small ribosomal subunit protein uS8 from Pseudoalteromonas translucida (strain TAC 125).